The primary structure comprises 708 residues: E3 ubiquitin-protein ligase RNF169 (708 aa).

Low complexity-rich tracts occupy residues 1–20 (MAAA…AALS) and 33–53 (AAKT…LSPP). Disordered regions lie at residues 1–71 (MAAA…CAGC), 96–169 (ADAA…EPDF), and 195–262 (EEKL…MTQT). Residue Ser12 is modified to Phosphoserine. An RING-type zinc finger spans residues 68–107 (CAGCLEPPGEAAALPCGHSLCRGCAQRAADAAGPGCPRCR). Over residues 132-147 (CARRSQPERCRPRRDG) the composition is skewed to basic and acidic residues. Residues 148-167 (GAAAAGPRPEQEPRAAPAEP) are compositionally biased toward low complexity. Basic and acidic residues predominate over residues 195 to 243 (EEKLQEEKPSEDQIHKLLPEDTETGKRKMDEQKKRDEPLVLKTNLERCP). The UMI motif signature appears at 205–213 (EDQIHKLLP). Residues Ser247 and Ser249 each carry the phosphoserine modification. A Glycyl lysine isopeptide (Lys-Gly) (interchain with G-Cter in SUMO2) cross-link involves residue Lys286. Ser339 is modified (phosphoserine). Lys362 is covalently cross-linked (Glycyl lysine isopeptide (Lys-Gly) (interchain with G-Cter in SUMO2)). Phosphoserine is present on residues Ser368, Ser403, and Ser409. At Thr410 the chain carries Phosphothreonine. Ser485 bears the Phosphoserine mark. Residues 491-555 (SEYTGPTSAD…EQFEGLGSTP (65 aa)) form a disordered region. Lys511 participates in a covalent cross-link: Glycyl lysine isopeptide (Lys-Gly) (interchain with G-Cter in SUMO2). Thr554 carries the post-translational modification Phosphothreonine. Ser644 is subject to Phosphoserine. Residues 665–682 (QEEEDRQLALQLQRMFDN) carry the MIU motif motif. An LR motif motif is present at residues 689 to 701 (RRKGSVDQYLLRS). A Phosphoserine modification is found at Ser693.

It belongs to the RNF169 family. As to quaternary structure, interacts with DYRK1B. Phosphorylated by DYRK1A; phosphorylation increases RNF169 ability to block accumulation of TP53BP1 at the DSB sites.

The protein resides in the chromosome. It localises to the nucleus. It is found in the nucleoplasm. It catalyses the reaction S-ubiquitinyl-[E2 ubiquitin-conjugating enzyme]-L-cysteine + [acceptor protein]-L-lysine = [E2 ubiquitin-conjugating enzyme]-L-cysteine + N(6)-ubiquitinyl-[acceptor protein]-L-lysine.. It functions in the pathway protein modification; protein ubiquitination. In terms of biological role, probable E3 ubiquitin-protein ligase that acts as a regulator of double-strand breaks (DSBs) repair following DNA damage. Functions in a non-canonical fashion to harness RNF168-mediated protein recruitment to DSB-containing chromatin, thereby contributing to regulation of DSB repair pathway utilization. Once recruited to DSB repair sites by recognizing and binding ubiquitin catalyzed by RNF168, competes with TP53BP1 and BRCA1 for association with RNF168-modified chromatin, thereby favouring homologous recombination repair (HRR) and single-strand annealing (SSA) instead of non-homologous end joining (NHEJ) mediated by TP53BP1. E3 ubiquitin-protein ligase activity is not required for regulation of DSBs repair. In Homo sapiens (Human), this protein is E3 ubiquitin-protein ligase RNF169 (RNF169).